A 128-amino-acid chain; its full sequence is Transcription antitermination protein NusB (128 aa).

This sequence belongs to the NusB family.

Its function is as follows. Involved in transcription antitermination. Required for transcription of ribosomal RNA (rRNA) genes. Binds specifically to the boxA antiterminator sequence of the ribosomal RNA (rrn) operons. This chain is Transcription antitermination protein NusB, found in Exiguobacterium sp. (strain ATCC BAA-1283 / AT1b).